Here is a 239-residue protein sequence, read N- to C-terminus: 1-(5-phosphoribosyl)-5-[(5-phosphoribosylamino)methylideneamino] imidazole-4-carboxamide isomerase (239 aa).

Asp8 (proton acceptor) is an active-site residue. Asp129 (proton donor) is an active-site residue.

The protein belongs to the HisA/HisF family.

Its subcellular location is the cytoplasm. The catalysed reaction is 1-(5-phospho-beta-D-ribosyl)-5-[(5-phospho-beta-D-ribosylamino)methylideneamino]imidazole-4-carboxamide = 5-[(5-phospho-1-deoxy-D-ribulos-1-ylimino)methylamino]-1-(5-phospho-beta-D-ribosyl)imidazole-4-carboxamide. The protein operates within amino-acid biosynthesis; L-histidine biosynthesis; L-histidine from 5-phospho-alpha-D-ribose 1-diphosphate: step 4/9. The polypeptide is 1-(5-phosphoribosyl)-5-[(5-phosphoribosylamino)methylideneamino] imidazole-4-carboxamide isomerase (Bacillus cereus (strain ATCC 10987 / NRS 248)).